The chain runs to 131 residues: UPF0102 protein YraN (131 aa).

The protein belongs to the UPF0102 family.

The sequence is that of UPF0102 protein YraN from Salmonella arizonae (strain ATCC BAA-731 / CDC346-86 / RSK2980).